The sequence spans 104 residues: PTS system lactose-specific EIIA component (104 aa).

Residues 1–102 (MNRDEVQLLG…MKHLIELYKK (102 aa)) form the PTS EIIA type-3 domain. His78 acts as the Tele-phosphohistidine intermediate in catalysis. His78 carries the post-translational modification Phosphohistidine; by HPr. Asp81 contacts Mg(2+).

In terms of assembly, homotrimer. Requires Mg(2+) as cofactor.

It is found in the cytoplasm. In terms of biological role, the phosphoenolpyruvate-dependent sugar phosphotransferase system (sugar PTS), a major carbohydrate active transport system, catalyzes the phosphorylation of incoming sugar substrates concomitantly with their translocation across the cell membrane. The enzyme II LacEF PTS system is involved in lactose transport. This Staphylococcus epidermidis (strain ATCC 35984 / DSM 28319 / BCRC 17069 / CCUG 31568 / BM 3577 / RP62A) protein is PTS system lactose-specific EIIA component.